The following is a 293-amino-acid chain: Acetylglutamate kinase (293 aa).

Substrate contacts are provided by residues 67-68 (GG), Arg-89, and Asn-190.

Belongs to the acetylglutamate kinase family. ArgB subfamily.

It localises to the cytoplasm. The catalysed reaction is N-acetyl-L-glutamate + ATP = N-acetyl-L-glutamyl 5-phosphate + ADP. It participates in amino-acid biosynthesis; L-arginine biosynthesis; N(2)-acetyl-L-ornithine from L-glutamate: step 2/4. Its function is as follows. Catalyzes the ATP-dependent phosphorylation of N-acetyl-L-glutamate. The chain is Acetylglutamate kinase from Nitrosospira multiformis (strain ATCC 25196 / NCIMB 11849 / C 71).